The sequence spans 598 residues: Protein unc-93 homolog B1 (598 aa).

Residues 1–36 form a disordered region; the sequence is MEVEPPLYPVAGAAGPQGDEDRHGVPDGPEAPLDEL. 5 consecutive transmembrane segments (helical) span residues 64 to 84, 110 to 130, 132 to 152, 160 to 180, and 223 to 243; these read VLAA…LLQM, KMLM…PVLI, FFGT…FVST, TLVP…ASMG, and IFYS…IYFL. N-linked (GlcNAc...) asparagine glycans are attached at residues asparagine 251 and asparagine 272. A run of 5 helical transmembrane segments spans residues 285 to 305, 343 to 363, 378 to 398, 403 to 423, and 428 to 448; these read LIVV…MVLG, LVPF…GFAL, LLIA…LGLW, VPLV…FFWA, and VLQH…GSAL. Asparagine 449 is a glycosylation site (N-linked (GlcNAc...) asparagine). The next 2 helical transmembrane spans lie at 469–489 and 495–515; these read FIFT…YLGS and AKLA…LWME. Residues 524–598 form a disordered region; sequence PRQPRIPKPQ…ALGGDGPEEQ (75 aa). The segment covering 544 to 554 has biased composition (acidic residues); it reads EDNSDESDMEG. 2 positions are modified to phosphoserine: serine 547 and serine 550.

The protein belongs to the unc-93 family. In terms of assembly, interacts with TLR3, TLR5, TLR7, TLR8, TLR9 and TLR13 (probably via transmembrane domain). Post-translationally, N-glycosylated.

It localises to the endoplasmic reticulum membrane. It is found in the endosome. The protein resides in the lysosome. The protein localises to the cytoplasmic vesicle. Its subcellular location is the phagosome. Its function is as follows. Plays an important role in innate and adaptive immunity by regulating nucleotide-sensing Toll-like receptor (TLR) signaling. Required for the transport of a subset of TLRs (including TLR3, TLR7 and TLR9) from the endoplasmic reticulum to endolysosomes where they can engage pathogen nucleotides and activate signaling cascades. May play a role in autoreactive B-cells removal. The sequence is that of Protein unc-93 homolog B1 from Mus musculus (Mouse).